The chain runs to 232 residues: Aspartate/glutamate leucyltransferase (232 aa).

It belongs to the R-transferase family. Bpt subfamily.

The protein localises to the cytoplasm. The catalysed reaction is N-terminal L-glutamyl-[protein] + L-leucyl-tRNA(Leu) = N-terminal L-leucyl-L-glutamyl-[protein] + tRNA(Leu) + H(+). It catalyses the reaction N-terminal L-aspartyl-[protein] + L-leucyl-tRNA(Leu) = N-terminal L-leucyl-L-aspartyl-[protein] + tRNA(Leu) + H(+). Its function is as follows. Functions in the N-end rule pathway of protein degradation where it conjugates Leu from its aminoacyl-tRNA to the N-termini of proteins containing an N-terminal aspartate or glutamate. This chain is Aspartate/glutamate leucyltransferase, found in Vibrio vulnificus (strain YJ016).